A 189-amino-acid polypeptide reads, in one-letter code: Interferon alpha-14 (189 aa).

A signal peptide spans Met1 to Gly23. Cystine bridges form between Cys24/Cys122 and Cys52/Cys162. Asn95 is a glycosylation site (N-linked (GlcNAc...) asparagine).

This sequence belongs to the alpha/beta interferon family.

It localises to the secreted. Its function is as follows. Produced by macrophages, IFN-alpha have antiviral activities. Interferon stimulates the production of two enzymes: a protein kinase and an oligoadenylate synthetase. The chain is Interferon alpha-14 (IFNA14) from Homo sapiens (Human).